Consider the following 593-residue polypeptide: Arginine--tRNA ligase (593 aa).

Positions 138–148 match the 'HIGH' region motif; the sequence is ANPTGPLHVGH.

The protein belongs to the class-I aminoacyl-tRNA synthetase family. Monomer.

The protein localises to the cytoplasm. The catalysed reaction is tRNA(Arg) + L-arginine + ATP = L-arginyl-tRNA(Arg) + AMP + diphosphate. The sequence is that of Arginine--tRNA ligase from Burkholderia lata (strain ATCC 17760 / DSM 23089 / LMG 22485 / NCIMB 9086 / R18194 / 383).